Consider the following 163-residue polypeptide: Nucleotide-binding protein CGSHiGG_08790 (163 aa).

This sequence belongs to the YajQ family.

Nucleotide-binding protein. This chain is Nucleotide-binding protein CGSHiGG_08790, found in Haemophilus influenzae (strain PittGG).